A 68-amino-acid chain; its full sequence is Beta-defensin 1 (68 aa).

The N-terminal stretch at 1-21 (MRTSYLLLFTLCLLLSEMASG) is a signal peptide. Residues 22–32 (DNFLTGLGHRS) constitute a propeptide that is removed on maturation. Intrachain disulfides connect cysteine 37/cysteine 66, cysteine 44/cysteine 59, and cysteine 49/cysteine 67.

The protein belongs to the beta-defensin family. In terms of assembly, monomer. Homodimer.

Its subcellular location is the secreted. The protein localises to the membrane. Its function is as follows. Has bactericidal activity. May act as a ligand for C-C chemokine receptor CCR6. Positively regulates the sperm motility and bactericidal activity in a CCR6-dependent manner. Binds to CCR6 and triggers Ca2+ mobilization in the sperm which is important for its motility. This chain is Beta-defensin 1 (DEFB1), found in Cercopithecus erythrogaster (Red-bellied monkey).